The chain runs to 173 residues: Shikimate kinase 1 (173 aa).

Residue 14 to 19 (GAGKST) coordinates ATP. Serine 18 contributes to the Mg(2+) binding site. Substrate-binding residues include aspartate 36, arginine 60, and glycine 82. Arginine 120 contributes to the ATP binding site. Substrate is bound at residue arginine 140. Glutamine 157 is an ATP binding site.

This sequence belongs to the shikimate kinase family. In terms of assembly, monomer. Mg(2+) is required as a cofactor.

The protein resides in the cytoplasm. It catalyses the reaction shikimate + ATP = 3-phosphoshikimate + ADP + H(+). Its pathway is metabolic intermediate biosynthesis; chorismate biosynthesis; chorismate from D-erythrose 4-phosphate and phosphoenolpyruvate: step 5/7. In terms of biological role, catalyzes the specific phosphorylation of the 3-hydroxyl group of shikimic acid using ATP as a cosubstrate. The chain is Shikimate kinase 1 from Yersinia pseudotuberculosis serotype O:1b (strain IP 31758).